The following is a 299-amino-acid chain: Prohibitin-2 (299 aa).

Ala-2 carries the post-translational modification N-acetylalanine. Positions 19 to 49 (MGTALKLLLGAGAVAYGVRESVFTVEGGHRA) are necessary for transcriptional repression. Position 128 is a phosphotyrosine (Tyr-128). An N6-acetyllysine modification is found at Lys-147. A necessary for transcriptional repression region spans residues 150-174 (ASQLITQRAQVSLLIRRELTERAKD). At Ser-151 the chain carries Phosphoserine. The stretch at 190–238 (SREYTAAVEAKQVAQQEAQRAQFLVEKAKQEQRQKIVQAEGEAEAAKML) forms a coiled coil. Lys-200, Lys-236, Lys-250, and Lys-262 each carry N6-acetyllysine.

It belongs to the prohibitin family. The mitochondrial prohibitin complex consists of two subunits (PHB1 and PHB2), assembled into a membrane-associated ring-shaped supercomplex of approximately 1 mDa. Interacts with ESR1, HDAC1 and HDAC5. Interacts with ZNF703. Interacts with STOML2. Interacts with ARFGEF3. Interacts with SPHK2. Interacts with COX4I1; the interaction associates PHB2 with COX. Interacts with MAP1LC3B (membrane-bound form LC3-II); the interaction is direct and upon mitochondrial depolarization and proteasome-dependent outer membrane rupture. Interacts with IGFBP6 (via C-terminal domain). Interacts with CLPB. Interacts with CD86 (via cytoplasmic domain); the interactions increases after priming with CD40. Interacts with AFG3L2. Interacts with DNAJC19. Interacts with AKT2; this interaction may be important for myogenic differentiation. In terms of processing, phosphorylated. Tyrosine phosphorylation is indirectly stimulated by IGFBP6.

The protein localises to the mitochondrion inner membrane. It localises to the cytoplasm. The protein resides in the nucleus. It is found in the cell membrane. Its function is as follows. Protein with pleiotropic attributes mediated in a cell-compartment- and tissue-specific manner, which include the plasma membrane-associated cell signaling functions, mitochondrial chaperone, and transcriptional co-regulator of transcription factors and sex steroid hormones in the nucleus. Functionally, in the mitochondria, together with PHB, forms large ring complexes (prohibitin complexes) in the inner mitochondrial membrane (IMM) and functions as a chaperone protein that stabilizes mitochondrial respiratory enzymes and maintains mitochondrial integrity in the IMM, which is required for mitochondrial morphogenesis, neuronal survival, and normal lifespan. The prohibitin complex, with DNAJC19, regulates cardiolipin remodeling and the protein turnover of OMA1 in a cardiolipin-binding manner. Also regulates cytochrome-c oxidase assembly (COX) and mitochondrial respiration. Binding to sphingoid 1-phosphate (SPP) modulates its regulator activity. Has a key role of mitophagy receptor involved in targeting mitochondria for autophagic degradation. Involved in mitochondrial-mediated antiviral innate immunity, activates RIG-I-mediated signal transduction and production of IFNB1 and pro-inflammatory cytokine IL6. In terms of biological role, in the nucleus, serves as transcriptional co-regulator. Acts as a mediator of transcriptional repression by nuclear hormone receptors via recruitment of histone deacetylases. Functions as an estrogen receptor (ER)-selective coregulator that potentiates the inhibitory activities of antiestrogens and represses the activity of estrogens. Competes with NCOA1 for modulation of ER transcriptional activity. In the plasma membrane, is involved in IGFBP6-induced cell migration. Cooperates with CD86 to mediate CD86-signaling in B lymphocytes that regulates the level of IgG1 produced through the activation of distal signaling intermediates. Upon CD40 engagement, required to activate NF-kappa-B signaling pathway via phospholipase C and protein kinase C activation. The polypeptide is Prohibitin-2 (Rattus norvegicus (Rat)).